Here is a 289-residue protein sequence, read N- to C-terminus: 4-diphosphocytidyl-2-C-methyl-D-erythritol kinase (289 aa).

Residue K11 is part of the active site. 93-103 contributes to the ATP binding site; it reads PLAAGLAGGSA. D135 is a catalytic residue.

This sequence belongs to the GHMP kinase family. IspE subfamily.

The enzyme catalyses 4-CDP-2-C-methyl-D-erythritol + ATP = 4-CDP-2-C-methyl-D-erythritol 2-phosphate + ADP + H(+). It functions in the pathway isoprenoid biosynthesis; isopentenyl diphosphate biosynthesis via DXP pathway; isopentenyl diphosphate from 1-deoxy-D-xylulose 5-phosphate: step 3/6. Functionally, catalyzes the phosphorylation of the position 2 hydroxy group of 4-diphosphocytidyl-2C-methyl-D-erythritol. The protein is 4-diphosphocytidyl-2-C-methyl-D-erythritol kinase of Thermoanaerobacter sp. (strain X514).